The following is a 171-amino-acid chain: 6,7-dimethyl-8-ribityllumazine synthase (171 aa).

5-amino-6-(D-ribitylamino)uracil-binding positions include Phe24, 58-60 (ALE), and 82-84 (AVI). 87–88 (ET) provides a ligand contact to (2S)-2-hydroxy-3-oxobutyl phosphate. His90 functions as the Proton donor in the catalytic mechanism. Asn115 is a 5-amino-6-(D-ribitylamino)uracil binding site. (2S)-2-hydroxy-3-oxobutyl phosphate is bound at residue Arg129. The segment at 150–171 (ALDQLGDDEDEEEDEEDEEERA) is disordered. Acidic residues predominate over residues 154–171 (LGDDEDEEEDEEDEEERA).

It belongs to the DMRL synthase family.

The catalysed reaction is (2S)-2-hydroxy-3-oxobutyl phosphate + 5-amino-6-(D-ribitylamino)uracil = 6,7-dimethyl-8-(1-D-ribityl)lumazine + phosphate + 2 H2O + H(+). It participates in cofactor biosynthesis; riboflavin biosynthesis; riboflavin from 2-hydroxy-3-oxobutyl phosphate and 5-amino-6-(D-ribitylamino)uracil: step 1/2. In terms of biological role, catalyzes the formation of 6,7-dimethyl-8-ribityllumazine by condensation of 5-amino-6-(D-ribitylamino)uracil with 3,4-dihydroxy-2-butanone 4-phosphate. This is the penultimate step in the biosynthesis of riboflavin. In Burkholderia ambifaria (strain MC40-6), this protein is 6,7-dimethyl-8-ribityllumazine synthase.